A 510-amino-acid polypeptide reads, in one-letter code: Inner membrane protein YeeR (510 aa).

A topological domain (cytoplasmic) is located at residue Met1. Residues 2-22 (LQIVGALILLIAGFAILRLLF) form a helical membrane-spanning segment. Topologically, residues 23-30 (RALISTAS) are periplasmic. The chain crosses the membrane as a helical span at residues 31–51 (ALAGLILLCLFGPALLAGYIT). Residues 52–61 (ERITRLFHIR) lie on the Cytoplasmic side of the membrane. A helical membrane pass occupies residues 62–82 (WLAGVFLTIAGMIISFMWGLD). The Periplasmic segment spans residues 83–94 (GKHIALEAHTFD). A helical transmembrane segment spans residues 95-115 (SVKFILTTALAGGLLAVPLQI). The Cytoplasmic segment spans residues 116-136 (KNIQQNGITPEDISKEINGYY). The helical transmembrane segment at 137-157 (CCFYTAFFLMACSACAPLIAL) threads the bilayer. At 158–164 (QYDISPS) the chain is on the periplasmic side. Residues 165-185 (LMWWGGLLYWLAALVTLLWAA) traverse the membrane as a helical segment. Topologically, residues 186–510 (SQIQALKKLT…KIREGKVEER (325 aa)) are cytoplasmic.

The protein localises to the cell inner membrane. This is Inner membrane protein YeeR (yeeR) from Escherichia coli (strain K12).